The following is a 380-amino-acid chain: Queuine tRNA-ribosyltransferase (380 aa).

The active-site Proton acceptor is D96. Substrate is bound by residues 96-100 (DSGGF), D150, Q193, and G220. An RNA binding region spans residues 251 to 257 (GVGAPDS). The active-site Nucleophile is the D270. Residues 275–279 (TRIAR) form an RNA binding; important for wobble base 34 recognition region. C308, C310, C313, and H339 together coordinate Zn(2+).

This sequence belongs to the queuine tRNA-ribosyltransferase family. In terms of assembly, homodimer. Within each dimer, one monomer is responsible for RNA recognition and catalysis, while the other monomer binds to the replacement base PreQ1. Requires Zn(2+) as cofactor.

The enzyme catalyses 7-aminomethyl-7-carbaguanine + guanosine(34) in tRNA = 7-aminomethyl-7-carbaguanosine(34) in tRNA + guanine. The protein operates within tRNA modification; tRNA-queuosine biosynthesis. Its function is as follows. Catalyzes the base-exchange of a guanine (G) residue with the queuine precursor 7-aminomethyl-7-deazaguanine (PreQ1) at position 34 (anticodon wobble position) in tRNAs with GU(N) anticodons (tRNA-Asp, -Asn, -His and -Tyr). Catalysis occurs through a double-displacement mechanism. The nucleophile active site attacks the C1' of nucleotide 34 to detach the guanine base from the RNA, forming a covalent enzyme-RNA intermediate. The proton acceptor active site deprotonates the incoming PreQ1, allowing a nucleophilic attack on the C1' of the ribose to form the product. After dissociation, two additional enzymatic reactions on the tRNA convert PreQ1 to queuine (Q), resulting in the hypermodified nucleoside queuosine (7-(((4,5-cis-dihydroxy-2-cyclopenten-1-yl)amino)methyl)-7-deazaguanosine). The protein is Queuine tRNA-ribosyltransferase of Streptococcus mutans serotype c (strain ATCC 700610 / UA159).